A 612-amino-acid chain; its full sequence is Chaperone protein DnaK (612 aa).

Position 173 is a phosphothreonine; by autocatalysis (threonine 173). Basic and acidic residues predominate over residues 524-544 (DDKVSEEDKQKAESAKDELKQ). Disordered regions lie at residues 524 to 560 (DDKV…KKDA) and 572 to 612 (LYEQ…DDKK). Residues 574–586 (EQVQQEAQQASGE) are compositionally biased toward low complexity. A compositionally biased stretch (acidic residues) spans 587–612 (QGEESGNQDDDVVDADYSEVDDDDKK).

This sequence belongs to the heat shock protein 70 family.

Its function is as follows. Acts as a chaperone. This Oceanobacillus iheyensis (strain DSM 14371 / CIP 107618 / JCM 11309 / KCTC 3954 / HTE831) protein is Chaperone protein DnaK.